Reading from the N-terminus, the 105-residue chain is Large ribosomal subunit protein uL24 (105 aa).

It belongs to the universal ribosomal protein uL24 family. Part of the 50S ribosomal subunit.

Functionally, one of two assembly initiator proteins, it binds directly to the 5'-end of the 23S rRNA, where it nucleates assembly of the 50S subunit. In terms of biological role, one of the proteins that surrounds the polypeptide exit tunnel on the outside of the subunit. The polypeptide is Large ribosomal subunit protein uL24 (Anaplasma marginale (strain St. Maries)).